Consider the following 631-residue polypeptide: Probable methyltransferase PMT16 (631 aa).

Over 1 to 14 the chain is Cytoplasmic; the sequence is MNLFTRISSRTKKA. The helical; Signal-anchor for type II membrane protein transmembrane segment at 15–35 threads the bilayer; it reads NLYYVTLVALLCIASYLLGIW. The Lumenal portion of the chain corresponds to 36 to 631; the sequence is QNTAVNPRAA…EDKNNTSALS (596 aa). N61, N230, and N626 each carry an N-linked (GlcNAc...) asparagine glycan.

The protein belongs to the methyltransferase superfamily.

The protein resides in the endoplasmic reticulum membrane. The polypeptide is Probable methyltransferase PMT16 (Arabidopsis thaliana (Mouse-ear cress)).